Reading from the N-terminus, the 175-residue chain is Translation initiation factor IF-3 (175 aa).

The protein belongs to the IF-3 family. As to quaternary structure, monomer.

It localises to the cytoplasm. Functionally, IF-3 binds to the 30S ribosomal subunit and shifts the equilibrium between 70S ribosomes and their 50S and 30S subunits in favor of the free subunits, thus enhancing the availability of 30S subunits on which protein synthesis initiation begins. The protein is Translation initiation factor IF-3 of Blochmanniella floridana.